The primary structure comprises 245 residues: Gem-associated protein 2 (245 aa).

This sequence belongs to the gemin-2 family. In terms of assembly, component of the core survival motor neuron (SMN) complex composed of Smn, Gem2, Gem3, rig/Gem5 and one of 3 almost identical Gem4 paralogs encoded by Glos/Gem4a, Gem4b or Gem4c. Part of a minimal SMN complex composed of Smn and Gem2 only; this complex is active in UsnRNP assembly. The SMN complex associates with the entire set of spliceosomal snRNP Sm proteins, SmB, SmD1, SmD2, SmD3, SmE, SmF and SmG, and with the snRNP-specific proteins snRNP-U1-70K, U2A, snf/U1A and U5-116KD. In terms of tissue distribution, expressed in nurse cells and oocytes.

The protein localises to the cytoplasm. The protein resides in the U-body. Component of the survival motor neuron (SMN) complex that catalyzes the assembly of small nuclear ribonucleoproteins (snRNPs), the building blocks of the spliceosome, and thereby plays an important role in the splicing of cellular pre-mRNAs. Most spliceosomal snRNPs contain a common set of Sm proteins SNRPB, SNRPD1, SNRPD2, SNRPD3, SNRPE, SNRPF and SNRPG that assemble in a heptameric protein ring on the Sm site of the small nuclear RNA to form the core snRNP (Sm core). In the cytosol, the Sm proteins SNRPD1, SNRPD2, SNRPE, SNRPF and SNRPG (5Sm) are trapped in an inactive 6S pICln-Sm complex by the chaperone CLNS1A that controls the assembly of the core snRNP. To assemble core snRNPs, the SMN complex accepts the trapped 5Sm proteins from CLNS1A. Binding of snRNA inside 5Sm ultimately triggers eviction of the SMN complex, thereby allowing binding of SNRPD3 and SNRPB to complete assembly of the core snRNP. Within the SMN complex, GEMIN2 constrains the conformation of 5Sm, thereby promoting 5Sm binding to snRNA containing the snRNP code (a nonameric Sm site and a 3'-adjacent stem-loop), thus preventing progression of assembly until a cognate substrate is bound. Involved in adult motor function. In Drosophila melanogaster (Fruit fly), this protein is Gem-associated protein 2.